The sequence spans 335 residues: 3-ketodihydrosphingosine reductase TSC10 (335 aa).

The NADPH site is built by G42, S44, S45, and G46. Residues 42-46 carry the GXSXG motif; that stretch reads GGSSG. Residue L47 participates in NADP(+) binding. NADPH is bound by residues R67, D68, K71, D95, and L96. An NADP(+)-binding site is contributed by D95. 3 residues coordinate NADP(+): Y190, K194, and I223. Y190 serves as the catalytic Proton acceptor. K194 serves as the catalytic Lowers pKa of active site Tyr. The helical transmembrane segment at 288–308 threads the bilayer; sequence TNNFLLDTLWLIVSSVGVPIW.

The protein belongs to the short-chain dehydrogenases/reductases (SDR) family.

It is found in the endoplasmic reticulum membrane. It carries out the reaction sphinganine + NADP(+) = 3-oxosphinganine + NADPH + H(+). It participates in lipid metabolism; sphingolipid metabolism. Its function is as follows. Catalyzes the reduction of 3'-oxosphinganine (3-ketodihydrosphingosine/KDS) to sphinganine (dihydrosphingosine/DHS), the second step of de novo sphingolipid biosynthesis. The sequence is that of 3-ketodihydrosphingosine reductase TSC10 (TSC10) from Cryptococcus neoformans var. neoformans serotype D (strain B-3501A) (Filobasidiella neoformans).